The following is a 1687-amino-acid chain: PH domain leucine-rich repeat-containing protein phosphatase 1 (1687 aa).

Met1 bears the N-acetylmethionine mark. Disordered stretches follow at residues 1–96 and 230–406; these read MEPA…GGGA and AAAP…AAPD. Residues 78–96 show a composition bias toward low complexity; that stretch reads APQPAAGGAAPVPAAGGGA. At Ser286 the chain carries Phosphoserine. Residues 314-326 are compositionally biased toward polar residues; that stretch reads DTESFSLSPSAES. Ser372 is subject to Phosphoserine. Residues 492–592 form the PH domain; the sequence is RIQLSGMYNV…WLRQVSKVAS (101 aa). LRR repeat units lie at residues 594–615, 617–638, 648–669, 671–692, 694–715, 717–739, 740–760, 764–785, 788–809, 829–850, 851–872, 874–895, 897–918, 919–940, 943–964, 969–989, 993–1014, 1017–1038, 1040–1061, 1062–1083, and 1085–1106; these read RISS…LFYS, DLTH…PAAR, KLKS…VCSI, TLAE…VGDM, NLQT…LESM, QLSY…EKLT, AVDK…QALR, HIKH…EVDF, HVTQ…IFNN, FLKA…PVPN, YLSY…VCES, KLEV…LFCN, SLRK…LERT, SVEV…LLMK, SLRF…TLSE, ILQE…PLLT, RLKI…KMAK, ELEE…IMNC, RMHT…MQLP, EVKC…ENLP, and KLQE…SLEL. Residues 1131–1378 enclose the PPM-type phosphatase domain; that stretch reads SHGYTEASGV…DSISAVVVQL (248 aa). Asp1166, Gly1167, Lys1330, and Asp1369 together coordinate Mn(2+). 2 disordered regions span residues 1414–1465 and 1604–1687; these read DRPS…SSPA and PGGY…DTPL. Positions 1424–1445 are enriched in low complexity; that stretch reads SSSSGMASEISSELSTSEMSSE. The segment covering 1649–1669 has biased composition (pro residues); that stretch reads LPPPPQPPQPQPQPQPQPQPQ. Residues 1685–1687 carry the PDZ-binding motif; sequence TPL.

Interacts with the nucleotide free form of K-Ras (KRAS) via its LRR repeats. Interacts with AKT2, AKT3 and PRKCB. Interacts with WDR48 and USP12. Mn(2+) serves as cofactor. In terms of tissue distribution, isoforms 1 and 2 are expressed in the retina.

It localises to the cytoplasm. The protein localises to the membrane. It is found in the nucleus. It catalyses the reaction O-phospho-L-seryl-[protein] + H2O = L-seryl-[protein] + phosphate. It carries out the reaction O-phospho-L-threonyl-[protein] + H2O = L-threonyl-[protein] + phosphate. Insensitive to okadaic acid. Deubiquitination by WDR48-USP12 complex positively regulates PHLPP1 stability. In terms of biological role, protein phosphatase involved in regulation of Akt and PKC signaling. Mediates dephosphorylation in the C-terminal domain hydrophobic motif of members of the AGC Ser/Thr protein kinase family; specifically acts on 'Ser-473' of AKT2 and AKT3, 'Ser-660' of PRKCB and 'Ser-657' of PRKCA. Isoform 2 seems to have a major role in regulating Akt signaling in hippocampal neurons. Akt regulates the balance between cell survival and apoptosis through a cascade that primarily alters the function of transcription factors that regulate pro- and antiapoptotic genes. Dephosphorylation of 'Ser-473' of Akt triggers apoptosis and suppression of tumor growth. Dephosphorylation of PRKCA and PRKCB leads to their destabilization and degradation. Dephosphorylates STK4 on 'Thr-387' leading to STK4 activation and apoptosis. Dephosphorylates RPS6KB1 and is involved in regulation of cap-dependent translation. Inhibits cancer cell proliferation and may act as a tumor suppressor. Dephosphorylates RAF1 inhibiting its kinase activity. May act as a negative regulator of K-Ras signaling in membrane rafts. Involved in the hippocampus-dependent long-term memory formation. Involved in circadian control by regulating the consolidation of circadian periodicity after resetting. Involved in development and function of regulatory T-cells. In Mus musculus (Mouse), this protein is PH domain leucine-rich repeat-containing protein phosphatase 1 (Phlpp1).